The chain runs to 154 residues: Ribosome maturation factor RimP (154 aa).

It belongs to the RimP family.

The protein resides in the cytoplasm. Required for maturation of 30S ribosomal subunits. This Salmonella gallinarum (strain 287/91 / NCTC 13346) protein is Ribosome maturation factor RimP.